Reading from the N-terminus, the 313-residue chain is Serine/threonine-protein kinase SZE1 (313 aa).

Glycine 2 is lipidated: N-myristoyl glycine. One can recognise a Protein kinase domain in the interval methionine 43 to alanine 311. Residues leucine 49–leucine 57 and lysine 71 each bind ATP.

Belongs to the protein kinase superfamily. Ser/Thr protein kinase family. Component of an immune signaling complex made of, at least, SZE1, BKN2/SZE2, ZAR1 and ZED1. Interacts directly with ZED1, ZAR1 and Pseudomonas syringae HOPZ1A at the plasma membrane. Post-translationally, N-terminal myristoylation is critical for plasma membrane localization and implication in defense responses. In terms of processing, autophosphorylated. As to expression, expressed in roots, seedlings, rosette leaves, floral organs, siliques and inflorescence stems.

Its subcellular location is the cell membrane. It catalyses the reaction L-seryl-[protein] + ATP = O-phospho-L-seryl-[protein] + ADP + H(+). The enzyme catalyses L-threonyl-[protein] + ATP = O-phospho-L-threonyl-[protein] + ADP + H(+). Together with BKN2/SZE2 and ZED1, required for effector-triggered immunity (e.g. Pseudomonas syringae effector type III HopZ1a) via the activation of ZAR1, thus being essential for resistance against P.syringae pv. tomato DC3000 expressing HopZ1a. The polypeptide is Serine/threonine-protein kinase SZE1 (Arabidopsis thaliana (Mouse-ear cress)).